The chain runs to 388 residues: Large ribosomal subunit protein uL3A (388 aa).

Over residues Met-1–Arg-10 the composition is skewed to basic and acidic residues. The interval Met-1–Lys-34 is disordered. Phosphoserine is present on Ser-13. The segment covering Pro-18 to Ala-31 has biased composition (basic residues). Phosphoserine occurs at positions 65, 140, 143, 207, 295, and 355. Residue Thr-372 is modified to Phosphothreonine.

It belongs to the universal ribosomal protein uL3 family. Component of the large ribosomal subunit (LSU). Mature yeast ribosomes consist of a small (40S) and a large (60S) subunit. The 40S small subunit contains 1 molecule of ribosomal RNA (18S rRNA) and at least 33 different proteins. The large 60S subunit contains 3 rRNA molecules (25S, 5.8S and 5S rRNA) and at least 46 different proteins. uL3 forms together with ES39L one of the contact sites for the signal recognition particle that targets ribosomes to the endoplasmic reticulum membrane.

The protein localises to the cytoplasm. In terms of biological role, component of the ribosome, a large ribonucleoprotein complex responsible for the synthesis of proteins in the cell. The small ribosomal subunit (SSU) binds messenger RNAs (mRNAs) and translates the encoded message by selecting cognate aminoacyl-transfer RNA (tRNA) molecules. The large subunit (LSU) contains the ribosomal catalytic site termed the peptidyl transferase center (PTC), which catalyzes the formation of peptide bonds, thereby polymerizing the amino acids delivered by tRNAs into a polypeptide chain. The nascent polypeptides leave the ribosome through a tunnel in the LSU and interact with protein factors that function in enzymatic processing, targeting, and the membrane insertion of nascent chains at the exit of the ribosomal tunnel. uL3 plays a role in coordinating processes of accommodating the aminoacyl-tRNA in the PTC. The chain is Large ribosomal subunit protein uL3A (rpl301) from Schizosaccharomyces pombe (strain 972 / ATCC 24843) (Fission yeast).